A 219-amino-acid polypeptide reads, in one-letter code: uncharacterized protein (219 aa).

The active site involves D58.

This sequence belongs to the pseudouridine synthase RluA family.

It carries out the reaction a uridine in RNA = a pseudouridine in RNA. This is an uncharacterized protein from Zymomonas mobilis subsp. mobilis (strain ATCC 31821 / ZM4 / CP4).